The following is a 382-amino-acid chain: Draxin-A (382 aa).

Residues 1-22 (MMSSSWCLPLALLFSTLAVSHS) form the signal peptide. Disordered stretches follow at residues 28–213 (THAK…PPSP), 233–252 (LPTL…GKMQ), and 275–297 (VDAW…SGNV). Residues 73-82 (RGAKASSGAG) are compositionally biased toward low complexity. Residues 139–149 (GPRKGRGQGHG) are compositionally biased toward basic residues. Positions 190–201 (SVSSAAAATSPS) are enriched in low complexity. Basic residues predominate over residues 281 to 290 (SRKKDKRRSK). N291 and N296 each carry an N-linked (GlcNAc...) asparagine glycan.

It belongs to the draxin family.

Its subcellular location is the secreted. Chemorepulsive axon guidance protein required for the development of spinal cord and forebrain commissures. Acts as a chemorepulsive guidance protein for commissural axons during development. Able to inhibit or repel neurite outgrowth from dorsal spinal cord. The sequence is that of Draxin-A (draxin-A) from Salmo salar (Atlantic salmon).